The primary structure comprises 727 residues: LIM domain-binding protein 3 (727 aa).

Residues 1–84 (MSYSVTLTGP…NLSLTLQKSK (84 aa)) enclose the PDZ domain. Phosphoserine is present on residues serine 44, serine 121, and serine 123. Positions 86-197 (PIPISTTAPP…GSSQPRQYNN (112 aa)) are disordered. Residues 140–156 (PTFSPAFSRPSAFSSLA) show a composition bias toward low complexity. A compositionally biased stretch (polar residues) spans 188–197 (GSSQPRQYNN). Phosphoserine is present on serine 217. Arginine 219 carries the omega-N-methylarginine modification. Serine 223 is modified (phosphoserine). Disordered regions lie at residues 284–440 (TEFM…YTPS) and 472–529 (APSV…PQVP). The segment covering 312–385 (ATTPLLPASA…SAPATHTSYS (74 aa)) has biased composition (low complexity). Pro residues predominate over residues 428-440 (PYTPSPAPAYTPS). Positions 494 to 513 (DSFSQKFAPGKSTTSISKQT) are enriched in polar residues. Omega-N-methylarginine occurs at positions 516 and 533. LIM zinc-binding domains follow at residues 549-607 (PLCG…QFFA), 608-667 (PLCA…LFST), and 668-727 (KCHG…TINL).

In terms of assembly, interacts via its LIM domains with various PKC isoforms. Interacts via its PDZ domain with the ACTN2 C-terminal region. Interacts with MYOZ1, MYOZ2 and MYOZ3. Expressed primarily in skeletal muscle and to a lesser extent in heart. Also detected in brain and placenta.

It is found in the cytoplasm. The protein localises to the perinuclear region. It localises to the cell projection. Its subcellular location is the pseudopodium. The protein resides in the cytoskeleton. It is found in the myofibril. The protein localises to the sarcomere. It localises to the z line. Functionally, may function as an adapter in striated muscle to couple protein kinase C-mediated signaling via its LIM domains to the cytoskeleton. The polypeptide is LIM domain-binding protein 3 (Homo sapiens (Human)).